Consider the following 230-residue polypeptide: 5'-methylthioadenosine/S-adenosylhomocysteine nucleosidase (230 aa).

E12 acts as the Proton acceptor in catalysis. Substrate-binding positions include G78, I153, and 174-175; that span reads ME. The active-site Proton donor is the D198.

Belongs to the PNP/UDP phosphorylase family. MtnN subfamily.

It catalyses the reaction S-adenosyl-L-homocysteine + H2O = S-(5-deoxy-D-ribos-5-yl)-L-homocysteine + adenine. The enzyme catalyses S-methyl-5'-thioadenosine + H2O = 5-(methylsulfanyl)-D-ribose + adenine. It carries out the reaction 5'-deoxyadenosine + H2O = 5-deoxy-D-ribose + adenine. It participates in amino-acid biosynthesis; L-methionine biosynthesis via salvage pathway; S-methyl-5-thio-alpha-D-ribose 1-phosphate from S-methyl-5'-thioadenosine (hydrolase route): step 1/2. Its function is as follows. Catalyzes the irreversible cleavage of the glycosidic bond in both 5'-methylthioadenosine (MTA) and S-adenosylhomocysteine (SAH/AdoHcy) to adenine and the corresponding thioribose, 5'-methylthioribose and S-ribosylhomocysteine, respectively. Also cleaves 5'-deoxyadenosine, a toxic by-product of radical S-adenosylmethionine (SAM) enzymes, into 5-deoxyribose and adenine. This Shewanella frigidimarina (strain NCIMB 400) protein is 5'-methylthioadenosine/S-adenosylhomocysteine nucleosidase.